The sequence spans 196 residues: MCTGKCARFVGLSLIPLSLVCIVANALLLVPNGQTTWTKDHLSLQVWLMAGFVGGGLMVLCPGISAVRAGGKGCCGAGCCGNRCRMLRSVFCSAIGLLGAIYCLSVSGTGLRIGPQCLMNGSWDYHFQDTAGSYLLNRTQWNLCVEPPDVVLWNVTLFSLLVAASCLEILLCGVQLVNASIGVLCGDCRKKQGSSQ.

Over Met1 to Phe9 the chain is Cytoplasmic. A helical transmembrane segment spans residues Val10–Val30. The Extracellular segment spans residues Pro31–Gln45. A helical transmembrane segment spans residues Val46–Ala66. Over Val67–Ser89 the chain is Cytoplasmic. The chain crosses the membrane as a helical span at residues Val90–Gly110. The interaction with MTOR and CASTOR1 stretch occupies residues Val90–Gln196. Residues Leu111 to Thr156 lie on the Extracellular side of the membrane. Asn120 carries an N-linked (GlcNAc...) asparagine glycan. Residue Trp123–Gln128 coordinates L-arginine. 2 N-linked (GlcNAc...) asparagine glycosylation sites follow: Asn137 and Asn154. A helical membrane pass occupies residues Leu157–Val177. The Cytoplasmic portion of the chain corresponds to Asn178–Gln196.

It belongs to the L6 tetraspanin family. Interacts with MTOR; the interaction is positively regulated by arginine and is negatively regulated by leucine. Interacts with SLC38A9. Interacts with SLC7A1; the interaction is negatively regulated by arginine. Interacts with CASTOR1; the interaction is positively regulated by leucine and is negatively regulated by arginine.

It localises to the lysosome membrane. It is found in the cell membrane. Acts as a lysosomal membrane arginine sensor. Forms a complex with MTOR and SLC38A9 on lysosomal membranes in an arginine-regulated manner, leading to arginine efflux which enables the activation of mTORC1 which subsequently leads to RPS6KB1 and EIF4EBP1 phosphorylations. Facilitates cell cycle G1/S phase progression and the translocation of the CDK4-CCND1 complex into the nucleus. CDKN1B and RHOA/ROCK signaling activity are involved in TM4SF5-mediated acceleration of G1/S phase progression. This Bos taurus (Bovine) protein is Transmembrane 4 L6 family member 5 (TM4SF5).